The primary structure comprises 311 residues: Tricarboxylate transport protein, mitochondrial (311 aa).

Residues 1 to 13 constitute a propeptide, removed in mature form; the sequence is MAAPRGPRALSAA. A disordered region spans residues 1–21; it reads MAAPRGPRALSAAAPGSGKPK. 3 Solcar repeats span residues 23-111, 122-208, and 218-303; these read THPG…LSNH, RRGL…LRNW, and MNPL…VVKL. 3 helical membrane-spanning segments follow: residues 29–46, 86–105, and 129–143; these read ILAG…TFPT, GLSS…FGMF, and LGAG…VCPM. Ser-156 carries the post-translational modification Phosphoserine. 3 helical membrane-spanning segments follow: residues 183–202, 224–241, and 278–297; these read GLTA…FFVM, GVFG…NTPL, and GTVP…FIIY.

The protein belongs to the mitochondrial carrier (TC 2.A.29) family. Possesses a short cleavable presequence, which, however, is found to be dispensable both for targeting to mitochondria and insertion into the inner membrane. However, the presequence is required to keep SLC25A1 in a soluble state and thus in an import-competent state. Mature SLC25A1 lacking the presequence is prone to aggregation. As to expression, expressed minimally but ubiquitously throughout the adult brain. Detected at higher levels in the olfactory bulb, neocortex and cerebellum. Also expressed in a subset of large cells in the globus pallidus.

Its subcellular location is the mitochondrion inner membrane. The protein resides in the mitochondrion membrane. It catalyses the reaction (S)-malate(in) + citrate(out) = (S)-malate(out) + citrate(in). It carries out the reaction D-threo-isocitrate(in) + citrate(out) = D-threo-isocitrate(out) + citrate(in). The enzyme catalyses citrate(out) + succinate(in) = citrate(in) + succinate(out). The catalysed reaction is cis-aconitate(in) + citrate(out) = cis-aconitate(out) + citrate(in). It catalyses the reaction trans-aconitate(in) + citrate(out) = trans-aconitate(out) + citrate(in). It carries out the reaction phosphoenolpyruvate(in) + citrate(out) = phosphoenolpyruvate(out) + citrate(in). The enzyme catalyses maleate(in) + citrate(out) = maleate(out) + citrate(in). Its function is as follows. Mitochondrial electroneutral antiporter that exports citrate from the mitochondria into the cytosol in exchange for malate. Also able to mediate the exchange of citrate for isocitrate, phosphoenolpyruvate, cis-aconitate and to a lesser extent trans-aconitate, maleate and succinate. In the cytoplasm, citrate plays important roles in fatty acid and sterol synthesis, regulation of glycolysis, protein acetylation, and other physiopathological processes. In Mus musculus (Mouse), this protein is Tricarboxylate transport protein, mitochondrial.